The following is a 148-amino-acid chain: Large ribosomal subunit protein bL9 (148 aa).

Belongs to the bacterial ribosomal protein bL9 family.

In terms of biological role, binds to the 23S rRNA. This is Large ribosomal subunit protein bL9 from Bifidobacterium adolescentis (strain ATCC 15703 / DSM 20083 / NCTC 11814 / E194a).